The following is a 275-amino-acid chain: 4-hydroxy-3-methylbut-2-enyl diphosphate reductase (275 aa).

C12 lines the [4Fe-4S] cluster pocket. 2 residues coordinate (2E)-4-hydroxy-3-methylbut-2-enyl diphosphate: H40 and H70. The dimethylallyl diphosphate site is built by H40 and H70. Residues H40 and H70 each coordinate isopentenyl diphosphate. [4Fe-4S] cluster is bound at residue C92. Position 119 (H119) interacts with (2E)-4-hydroxy-3-methylbut-2-enyl diphosphate. A dimethylallyl diphosphate-binding site is contributed by H119. Position 119 (H119) interacts with isopentenyl diphosphate. E121 functions as the Proton donor in the catalytic mechanism. T151 provides a ligand contact to (2E)-4-hydroxy-3-methylbut-2-enyl diphosphate. Residue C181 participates in [4Fe-4S] cluster binding. Residues S209, S210, N211, and S251 each contribute to the (2E)-4-hydroxy-3-methylbut-2-enyl diphosphate site. Positions 209, 210, 211, and 251 each coordinate dimethylallyl diphosphate. The isopentenyl diphosphate site is built by S209, S210, N211, and S251.

The protein belongs to the IspH family. [4Fe-4S] cluster serves as cofactor.

The catalysed reaction is isopentenyl diphosphate + 2 oxidized [2Fe-2S]-[ferredoxin] + H2O = (2E)-4-hydroxy-3-methylbut-2-enyl diphosphate + 2 reduced [2Fe-2S]-[ferredoxin] + 2 H(+). It catalyses the reaction dimethylallyl diphosphate + 2 oxidized [2Fe-2S]-[ferredoxin] + H2O = (2E)-4-hydroxy-3-methylbut-2-enyl diphosphate + 2 reduced [2Fe-2S]-[ferredoxin] + 2 H(+). The protein operates within isoprenoid biosynthesis; dimethylallyl diphosphate biosynthesis; dimethylallyl diphosphate from (2E)-4-hydroxy-3-methylbutenyl diphosphate: step 1/1. It functions in the pathway isoprenoid biosynthesis; isopentenyl diphosphate biosynthesis via DXP pathway; isopentenyl diphosphate from 1-deoxy-D-xylulose 5-phosphate: step 6/6. In terms of biological role, catalyzes the conversion of 1-hydroxy-2-methyl-2-(E)-butenyl 4-diphosphate (HMBPP) into a mixture of isopentenyl diphosphate (IPP) and dimethylallyl diphosphate (DMAPP). Acts in the terminal step of the DOXP/MEP pathway for isoprenoid precursor biosynthesis. This Thermotoga petrophila (strain ATCC BAA-488 / DSM 13995 / JCM 10881 / RKU-1) protein is 4-hydroxy-3-methylbut-2-enyl diphosphate reductase.